A 341-amino-acid chain; its full sequence is N-acetyl-gamma-glutamyl-phosphate reductase (341 aa).

Cysteine 163 is a catalytic residue.

The protein belongs to the NAGSA dehydrogenase family. Type 1 subfamily.

The protein localises to the cytoplasm. It catalyses the reaction N-acetyl-L-glutamate 5-semialdehyde + phosphate + NADP(+) = N-acetyl-L-glutamyl 5-phosphate + NADPH + H(+). It functions in the pathway amino-acid biosynthesis; L-arginine biosynthesis; N(2)-acetyl-L-ornithine from L-glutamate: step 3/4. Catalyzes the NADPH-dependent reduction of N-acetyl-5-glutamyl phosphate to yield N-acetyl-L-glutamate 5-semialdehyde. This chain is N-acetyl-gamma-glutamyl-phosphate reductase, found in Idiomarina loihiensis (strain ATCC BAA-735 / DSM 15497 / L2-TR).